Here is a 517-residue protein sequence, read N- to C-terminus: L-amino-acid oxidase (517 aa).

The signal sequence occupies residues 1–18; it reads MNVFFMFSLLFLAALESC. C29 and C192 form a disulfide bridge. FAD is bound by residues 62–63, 82–83, R90, and 106–109; these read MA, EA, and GPMR. R109 serves as a coordination point for substrate. Residue N191 is glycosylated (N-linked (GlcNAc...) asparagine). Position 280 (V280) interacts with FAD. C350 and C431 are joined by a disulfide. N-linked (GlcNAc...) asparagine glycosylation is present at N380. Residue Y391 coordinates substrate. FAD-binding positions include E476 and 483–488; that span reads GWLDST. 483-484 contributes to the substrate binding site; it reads GW.

Belongs to the flavin monoamine oxidase family. FIG1 subfamily. As to quaternary structure, homodimer; non-covalently linked. The cofactor is FAD. In terms of processing, N-glycosylated. In terms of tissue distribution, expressed by the venom gland.

The protein resides in the secreted. It carries out the reaction an L-alpha-amino acid + O2 + H2O = a 2-oxocarboxylate + H2O2 + NH4(+). In terms of biological role, catalyzes an oxidative deamination of predominantly hydrophobic and aromatic L-amino acids, thus producing hydrogen peroxide that may contribute to the diverse toxic effects of this enzyme. Exhibits diverse biological activities, such as hemorrhage, hemolysis, edema, apoptosis of vascular endothelial cells or tumor cell lines, antibacterial and antiparasitic activities, as well as regulation of platelet aggregation. Effects of snake L-amino oxidases on platelets are controversial, since they either induce aggregation or inhibit agonist-induced aggregation. These different effects are probably due to different experimental conditions. The chain is L-amino-acid oxidase from Notechis scutatus scutatus (Mainland tiger snake).